The following is a 226-amino-acid chain: Cytidylate kinase (226 aa).

Position 10-18 (10-18) interacts with ATP; sequence GPASSGKST.

It belongs to the cytidylate kinase family. Type 1 subfamily.

It localises to the cytoplasm. The enzyme catalyses CMP + ATP = CDP + ADP. The catalysed reaction is dCMP + ATP = dCDP + ADP. The protein is Cytidylate kinase of Streptococcus pyogenes serotype M18 (strain MGAS8232).